The chain runs to 1057 residues: Glycine dehydrogenase (decarboxylating), mitochondrial (1057 aa).

The N-terminal 86 residues, 1–86 (MERARRLANR…GVGYPSQSRS (86 aa)), are a transit peptide targeting the mitochondrion. Positions 18–27 (SEAKQNRKTE) are enriched in basic and acidic residues. The segment at 18–47 (SEAKQNRKTESTSTTTTTPLPFSLSGSSSR) is disordered. The span at 28–47 (STSTTTTTPLPFSLSGSSSR) shows a compositional bias: low complexity. At Lys792 the chain carries N6-(pyridoxal phosphate)lysine.

This sequence belongs to the GcvP family. Homodimer. The glycine cleavage system is composed of four proteins: P, T, L and H. The cofactor is pyridoxal 5'-phosphate. Highly expressed in leaves. Detected in roots and embryos.

It is found in the mitochondrion. It carries out the reaction N(6)-[(R)-lipoyl]-L-lysyl-[glycine-cleavage complex H protein] + glycine + H(+) = N(6)-[(R)-S(8)-aminomethyldihydrolipoyl]-L-lysyl-[glycine-cleavage complex H protein] + CO2. In terms of biological role, the glycine cleavage system catalyzes the degradation of glycine. The P protein binds the alpha-amino group of glycine through its pyridoxal phosphate cofactor; CO(2) is released and the remaining methylamine moiety is then transferred to the lipoamide cofactor of the H protein. The chain is Glycine dehydrogenase (decarboxylating), mitochondrial (GDCSP) from Pisum sativum (Garden pea).